The following is a 329-amino-acid chain: tRNA N6-adenosine threonylcarbamoyltransferase (329 aa).

Fe cation-binding residues include histidine 108, histidine 112, and tyrosine 129. Residues 129–133, aspartate 161, glutamate 182, and serine 261 contribute to the substrate site; that span reads YVSGG. Fe cation is bound at residue aspartate 289.

Belongs to the KAE1 / TsaD family. It depends on Fe(2+) as a cofactor.

The protein localises to the cytoplasm. The catalysed reaction is L-threonylcarbamoyladenylate + adenosine(37) in tRNA = N(6)-L-threonylcarbamoyladenosine(37) in tRNA + AMP + H(+). Required for the formation of a threonylcarbamoyl group on adenosine at position 37 (t(6)A37) in tRNAs that read codons beginning with adenine. Is probably involved in the transfer of the threonylcarbamoyl moiety of threonylcarbamoyl-AMP (TC-AMP) to the N6 group of A37. This chain is tRNA N6-adenosine threonylcarbamoyltransferase, found in Ignicoccus hospitalis (strain KIN4/I / DSM 18386 / JCM 14125).